Consider the following 442-residue polypeptide: 3-phosphoshikimate 1-carboxyvinyltransferase (442 aa).

3-phosphoshikimate is bound by residues lysine 27, serine 28, and arginine 32. Lysine 27 serves as a coordination point for phosphoenolpyruvate. Residues glycine 100 and arginine 128 each contribute to the phosphoenolpyruvate site. Residues serine 174, serine 175, glutamine 176, serine 204, aspartate 321, and lysine 348 each contribute to the 3-phosphoshikimate site. Glutamine 176 provides a ligand contact to phosphoenolpyruvate. The Proton acceptor role is filled by aspartate 321. Residues arginine 352, arginine 394, and lysine 424 each contribute to the phosphoenolpyruvate site.

It belongs to the EPSP synthase family. As to quaternary structure, monomer.

The protein resides in the cytoplasm. It catalyses the reaction 3-phosphoshikimate + phosphoenolpyruvate = 5-O-(1-carboxyvinyl)-3-phosphoshikimate + phosphate. It participates in metabolic intermediate biosynthesis; chorismate biosynthesis; chorismate from D-erythrose 4-phosphate and phosphoenolpyruvate: step 6/7. In terms of biological role, catalyzes the transfer of the enolpyruvyl moiety of phosphoenolpyruvate (PEP) to the 5-hydroxyl of shikimate-3-phosphate (S3P) to produce enolpyruvyl shikimate-3-phosphate and inorganic phosphate. The chain is 3-phosphoshikimate 1-carboxyvinyltransferase from Herminiimonas arsenicoxydans.